Here is a 394-residue protein sequence, read N- to C-terminus: Exodeoxyribonuclease 7 large subunit (394 aa).

This sequence belongs to the XseA family. As to quaternary structure, heterooligomer composed of large and small subunits.

The protein localises to the cytoplasm. It catalyses the reaction Exonucleolytic cleavage in either 5'- to 3'- or 3'- to 5'-direction to yield nucleoside 5'-phosphates.. In terms of biological role, bidirectionally degrades single-stranded DNA into large acid-insoluble oligonucleotides, which are then degraded further into small acid-soluble oligonucleotides. This chain is Exodeoxyribonuclease 7 large subunit, found in Thermotoga sp. (strain RQ2).